The sequence spans 468 residues: MTKQDTTDKLWGGRFTEATDAFVERFTASVDFDRRMYHHDIRGSIAHATMLAKVGVLTEEERDQIINGLREIEAEIEAGAFEWSVKLEDVHMNIEARLTQKIGITGKKLHTGRSRNDQVATDIRLYLRDEVDVIAAELLRLIAALADLAEREADAIMPGFTHLQTAQPVTFGHHMLAWAEMLKRDFSRLADCRERFNVSPLGAAALAGTTYSIDRQYTSELLGFNGPAENSLDAVSDRDFAIEFCSFASLLMMHLSRFSEELVLWTSAQFNFINLPDRFCTGSSIMPQKKNPDVPELIRGKSGRVSGHLISLLMLMKSQPLAYNKDNQEDKEPLFDAIDTVKGCLKAYGDMMPAVSVNRDAMAESARRGFSTATDLADYLVRKGLPFRDAHEVVGKAVALGVSSGRDLSEMSLEELREFSADIEVDVFEVLTLEGSVNARNHIGGTAPEQVRAAVVRTREWLKRNTEM.

Belongs to the lyase 1 family. Argininosuccinate lyase subfamily.

It is found in the cytoplasm. The enzyme catalyses 2-(N(omega)-L-arginino)succinate = fumarate + L-arginine. It functions in the pathway amino-acid biosynthesis; L-arginine biosynthesis; L-arginine from L-ornithine and carbamoyl phosphate: step 3/3. The sequence is that of Argininosuccinate lyase from Hahella chejuensis (strain KCTC 2396).